Reading from the N-terminus, the 451-residue chain is Glutamyl-tRNA reductase (451 aa).

Substrate-binding positions include 47 to 50 (TCNR), Ser132, 137 to 139 (EPQ), and Gln143. Cys48 (nucleophile) is an active-site residue. 212–217 (AAGEMN) lines the NADP(+) pocket.

Belongs to the glutamyl-tRNA reductase family. As to quaternary structure, homodimer.

The catalysed reaction is (S)-4-amino-5-oxopentanoate + tRNA(Glu) + NADP(+) = L-glutamyl-tRNA(Glu) + NADPH + H(+). Its pathway is porphyrin-containing compound metabolism; protoporphyrin-IX biosynthesis; 5-aminolevulinate from L-glutamyl-tRNA(Glu): step 1/2. Functionally, catalyzes the NADPH-dependent reduction of glutamyl-tRNA(Glu) to glutamate 1-semialdehyde (GSA). This chain is Glutamyl-tRNA reductase, found in Psychrobacter sp. (strain PRwf-1).